Here is an 887-residue protein sequence, read N- to C-terminus: Translation initiation factor IF-2 (887 aa).

The segment at 1 to 291 is disordered; sequence MTDQADTSER…RRRVERERKK (291 aa). A compositionally biased stretch (low complexity) spans 58-117; sequence AAPAAAPAAAPAAAEEVAKKPVAAPEVKPAAPVEERPAPVAKAAPEVKAVPAPAPAAAPA. Basic and acidic residues-rich tracts occupy residues 148–178, 185–194, 201–215, and 267–276; these read SAREREGEDRRRAEEEARRFAEEDARREAER, AAEEASRHTA, RAAEEAKRRLDDDRP, and AFDDESERQR. In terms of domain architecture, tr-type G spans 385 to 553; sequence ARAPVVTVMG…TILLQAELLD (169 aa). A G1 region spans residues 394 to 401; sequence GHVDHGKT. Position 394–401 (394–401) interacts with GTP; sequence GHVDHGKT. The segment at 419 to 423 is G2; it reads GITQH. The interval 441–444 is G3; it reads DTPG. Residues 441–445 and 495–498 contribute to the GTP site; these read DTPGH and NKMD. The interval 495–498 is G4; the sequence is NKMD. Residues 531–533 are G5; sequence SAK.

This sequence belongs to the TRAFAC class translation factor GTPase superfamily. Classic translation factor GTPase family. IF-2 subfamily.

The protein localises to the cytoplasm. In terms of biological role, one of the essential components for the initiation of protein synthesis. Protects formylmethionyl-tRNA from spontaneous hydrolysis and promotes its binding to the 30S ribosomal subunits. Also involved in the hydrolysis of GTP during the formation of the 70S ribosomal complex. This is Translation initiation factor IF-2 from Parvibaculum lavamentivorans (strain DS-1 / DSM 13023 / NCIMB 13966).